A 435-amino-acid polypeptide reads, in one-letter code: Estrogen-related receptor gamma (435 aa).

The segment at methionine 1–serine 64 is disordered. Residues serine 10–serine 29 are compositionally biased toward polar residues. The segment covering serine 34–serine 47 has biased composition (low complexity). The nuclear receptor DNA-binding region spans lysine 102–leucine 177. 2 NR C4-type zinc fingers span residues cysteine 105–cysteine 125 and cysteine 141–cysteine 160. One can recognise an NR LBD domain in the interval proline 210–lysine 434.

The protein belongs to the nuclear hormone receptor family. NR3 subfamily. In terms of assembly, homodimer. Interacts with NRIP1, NCOA1 and NCOR2. Binds TLE1, PNRC1 and PNRC2. Binds GRIP1. Post-translationally, acetylated by PCAF/KAT2 (in vitro).

The protein localises to the nucleus. Functionally, orphan receptor that acts as a transcription activator in the absence of bound ligand. Binds specifically to an estrogen response element and activates reporter genes controlled by estrogen response elements. Induces the expression of PERM1 in the skeletal muscle. In Pongo abelii (Sumatran orangutan), this protein is Estrogen-related receptor gamma (ESRRG).